A 291-amino-acid chain; its full sequence is Exosome complex component RRP42 (291 aa).

N-acetylalanine is present on A2. K116 bears the N6-acetyllysine mark. Position 177 is a phosphoserine (S177).

The protein belongs to the RNase PH family. As to quaternary structure, component of the RNA exosome core complex (Exo-9), composed of EXOSC1, EXOSC2, EXOSC3, EXOSC4, EXOSC5, EXOSC6, EXOSC7, EXOSC8 and EXOSC9; within the complex interacts with EXOSC2 and EXOSC4. The catalytically inactive RNA exosome core complex (Exo-9) associates with the catalytic subunit EXOSC10/RRP6. Exo-9 may associate with DIS3 to form the nucleolar exosome complex, or DIS3L to form the cytoplasmic exosome complex. Exo-9 is formed by a hexameric base ring consisting of the heterodimers EXOSC4-EXOSC9, EXOSC5-EXOSC8 and EXOSC6-EXOSC7, and a cap ring consisting of EXOSC1, EXOSC2 and EXOSC3. The RNA exosome complex associates with cofactors C1D/RRP47, MPHOSPH6/MPP6 and MTREX/MTR4. Interacts with ZC3HAV1. Interacts with DIS3; the interaction is direct.

It localises to the nucleus. It is found in the nucleolus. Its subcellular location is the cytoplasm. In terms of biological role, non-catalytic component of the RNA exosome complex which has 3'-&gt;5' exoribonuclease activity and participates in a multitude of cellular RNA processing and degradation events. In the nucleus, the RNA exosome complex is involved in proper maturation of stable RNA species such as rRNA, snRNA and snoRNA, in the elimination of RNA processing by-products and non-coding 'pervasive' transcripts, such as antisense RNA species and promoter-upstream transcripts (PROMPTs), and of mRNAs with processing defects, thereby limiting or excluding their export to the cytoplasm. The RNA exosome may be involved in Ig class switch recombination (CSR) and/or Ig variable region somatic hypermutation (SHM) by targeting AICDA deamination activity to transcribed dsDNA substrates. In the cytoplasm, the RNA exosome complex is involved in general mRNA turnover and specifically degrades inherently unstable mRNAs containing AU-rich elements (AREs) within their 3' untranslated regions, and in RNA surveillance pathways, preventing translation of aberrant mRNAs. It seems to be involved in degradation of histone mRNA. The catalytic inactive RNA exosome core complex of 9 subunits (Exo-9) is proposed to play a pivotal role in the binding and presentation of RNA for ribonucleolysis, and to serve as a scaffold for the association with catalytic subunits and accessory proteins or complexes. This chain is Exosome complex component RRP42 (EXOSC7), found in Homo sapiens (Human).